Consider the following 570-residue polypeptide: Biotin biosynthesis bifunctional protein BioHC (570 aa).

The tract at residues 1–29 is disordered; sequence MTEVNVRAAATPEEKPFLNRTRHEPANPQ. The segment at 1–279 is carboxylesterase; that stretch reads MTEVNVRAAA…HISHPREVAT (279 aa). Residues 12–25 show a composition bias toward basic and acidic residues; sequence PEEKPFLNRTRHEP. Substrate contacts are provided by residues Trp-41, 105–106, and 175–179; these read SL and FIALQ. Ser-105 functions as the Nucleophile in the catalytic mechanism. Catalysis depends on residues Asp-239 and His-267. His-267 is a substrate binding site. The interval 280-570 is malonyl-ACP O-methyltransferase; that stretch reads MINSFLRQQA…RKPLDESASA (291 aa).

In the N-terminal section; belongs to the AB hydrolase superfamily. Carboxylesterase BioH family. It in the C-terminal section; belongs to the methyltransferase superfamily.

The enzyme catalyses a carboxylic ester + H2O = an alcohol + a carboxylate + H(+). It catalyses the reaction malonyl-[ACP] + S-adenosyl-L-methionine = malonyl-[ACP] methyl ester + S-adenosyl-L-homocysteine. Its pathway is cofactor biosynthesis; biotin biosynthesis. Its function is as follows. Converts the free carboxyl group of a malonyl-thioester to its methyl ester by transfer of a methyl group from S-adenosyl-L-methionine (SAM). It allows to synthesize pimeloyl-ACP via the fatty acid synthetic pathway. The physiological role of BioH is to remove the methyl group introduced by BioC when the pimeloyl moiety is complete. It allows to synthesize pimeloyl-ACP via the fatty acid synthetic pathway through the hydrolysis of the ester bonds of pimeloyl-ACP esters. This Teredinibacter turnerae (strain ATCC 39867 / T7901) protein is Biotin biosynthesis bifunctional protein BioHC (bioC).